Consider the following 804-residue polypeptide: Type 2 DNA topoisomerase 6 subunit B (804 aa).

Residues Asn-58, Asp-89, 110 to 111 (SR), 120 to 127 (GQQGIGIS), and Lys-629 each bind ATP.

Belongs to the TOP6B family. As to quaternary structure, homodimer. Heterotetramer of two Top6A and two Top6B chains.

It catalyses the reaction ATP-dependent breakage, passage and rejoining of double-stranded DNA.. Functionally, relaxes both positive and negative superturns and exhibits a strong decatenase activity. The protein is Type 2 DNA topoisomerase 6 subunit B of Halobacterium salinarum (strain ATCC 29341 / DSM 671 / R1).